Consider the following 449-residue polypeptide: GTPase Der (449 aa).

EngA-type G domains follow at residues 4-174 and 183-358; these read PIVA…PPKT and LRVA…AQRQ. GTP-binding positions include 10–17, 57–61, 126–129, 189–196, 236–240, and 301–304; these read GRPNVGKS, DTAGL, NKCD, DTAGI, and NKWD. The 86-residue stretch at 359–444 folds into the KH-like domain; the sequence is KRIPTSELNN…PIVIVFRSRE (86 aa).

The protein belongs to the TRAFAC class TrmE-Era-EngA-EngB-Septin-like GTPase superfamily. EngA (Der) GTPase family. In terms of assembly, associates with the 50S ribosomal subunit.

Functionally, GTPase that plays an essential role in the late steps of ribosome biogenesis. The chain is GTPase Der from Chloroflexus aggregans (strain MD-66 / DSM 9485).